A 689-amino-acid chain; its full sequence is Glycine--tRNA ligase beta subunit (689 aa).

It belongs to the class-II aminoacyl-tRNA synthetase family. Tetramer of two alpha and two beta subunits.

It is found in the cytoplasm. The catalysed reaction is tRNA(Gly) + glycine + ATP = glycyl-tRNA(Gly) + AMP + diphosphate. This chain is Glycine--tRNA ligase beta subunit, found in Actinobacillus pleuropneumoniae serotype 5b (strain L20).